The chain runs to 389 residues: Inner membrane transport protein YdhP (389 aa).

The Cytoplasmic segment spans residues 1-6; that stretch reads MKINYP. Residues 7-27 traverse the membrane as a helical segment; the sequence is LLALAIGAFGIGTTEFSPMGL. The Periplasmic portion of the chain corresponds to 28–43; sequence LPVIARGVDVSIPAAG. The helical transmembrane segment at 44–64 threads the bilayer; the sequence is MLISAYAVGVMVGAPLMTLLL. Over 65–70 the chain is Cytoplasmic; it reads SHRARR. A helical transmembrane segment spans residues 71–91; it reads SALIFLMAIFTLGNVLSAIAP. At 92–100 the chain is on the periplasmic side; that stretch reads DYMTLMLSR. Residues 101-121 traverse the membrane as a helical segment; that stretch reads ILTSLNHGAFFGLGSVVAASV. The Cytoplasmic portion of the chain corresponds to 122–130; the sequence is VPKHKQASA. Residues 131-151 form a helical membrane-spanning segment; the sequence is VATMFMGLTLANIGGVPAATW. The Periplasmic portion of the chain corresponds to 152 to 159; sequence LGETIGWR. Residues 160–180 form a helical membrane-spanning segment; the sequence is MSFLATAGLGVISMVSLFFSL. At 181 to 203 the chain is on the cytoplasmic side; the sequence is PKGGAGARPEVKKELAVLMRPQV. The helical transmembrane segment at 204–224 threads the bilayer; sequence LSALLTTVLGAGAMFTLYTYI. Residues 225 to 236 are Periplasmic-facing; the sequence is SPVLQSITHATP. A helical membrane pass occupies residues 237 to 257; sequence VFVTAMLVLIGVGFSIGNYLG. Residues 258–266 are Cytoplasmic-facing; the sequence is GKLADRSVN. A helical transmembrane segment spans residues 267–287; it reads GTLKGFLLLLMVIMLAIPFLA. The Periplasmic segment spans residues 288 to 290; it reads RNE. A helical membrane pass occupies residues 291–311; sequence FGAAISMVVWGAATFAVVPPL. Residues 312 to 330 are Cytoplasmic-facing; it reads QMRVMRVASEAPGLSSSVN. Residues 331-351 form a helical membrane-spanning segment; that stretch reads IGAFNLGNALGAAAGGAVISA. Over 352-356 the chain is Periplasmic; sequence GLGYS. Residues 357–377 traverse the membrane as a helical segment; the sequence is FVPVMGAIVAGLALLLVFMSA. Over 378–389 the chain is Cytoplasmic; the sequence is RKQPETVCVANS.

The protein belongs to the major facilitator superfamily.

The protein localises to the cell inner membrane. The polypeptide is Inner membrane transport protein YdhP (ydhP) (Escherichia coli (strain K12)).